A 148-amino-acid chain; its full sequence is Large-conductance mechanosensitive channel (148 aa).

2 helical membrane passes run Val16–Ile36 and Gly89–Val109.

The protein belongs to the MscL family. Homopentamer.

The protein resides in the cell inner membrane. In terms of biological role, channel that opens in response to stretch forces in the membrane lipid bilayer. May participate in the regulation of osmotic pressure changes within the cell. In Paraburkholderia xenovorans (strain LB400), this protein is Large-conductance mechanosensitive channel.